Consider the following 271-residue polypeptide: Formamidopyrimidine-DNA glycosylase (271 aa).

The Schiff-base intermediate with DNA role is filled by proline 2. Residue glutamate 3 is the Proton donor of the active site. Catalysis depends on lysine 58, which acts as the Proton donor; for beta-elimination activity. Histidine 91, arginine 110, and arginine 152 together coordinate DNA. The FPG-type zinc-finger motif lies at 237-271 (RAYGRGGQPCTVCQTELKEIKLGQRTSVFCPSCQR). Residue arginine 261 is the Proton donor; for delta-elimination activity of the active site.

It belongs to the FPG family. In terms of assembly, monomer. Zn(2+) is required as a cofactor.

The enzyme catalyses Hydrolysis of DNA containing ring-opened 7-methylguanine residues, releasing 2,6-diamino-4-hydroxy-5-(N-methyl)formamidopyrimidine.. It catalyses the reaction 2'-deoxyribonucleotide-(2'-deoxyribose 5'-phosphate)-2'-deoxyribonucleotide-DNA = a 3'-end 2'-deoxyribonucleotide-(2,3-dehydro-2,3-deoxyribose 5'-phosphate)-DNA + a 5'-end 5'-phospho-2'-deoxyribonucleoside-DNA + H(+). Functionally, involved in base excision repair of DNA damaged by oxidation or by mutagenic agents. Acts as a DNA glycosylase that recognizes and removes damaged bases. Has a preference for oxidized purines, such as 7,8-dihydro-8-oxoguanine (8-oxoG). Has AP (apurinic/apyrimidinic) lyase activity and introduces nicks in the DNA strand. Cleaves the DNA backbone by beta-delta elimination to generate a single-strand break at the site of the removed base with both 3'- and 5'-phosphates. The chain is Formamidopyrimidine-DNA glycosylase from Hahella chejuensis (strain KCTC 2396).